Consider the following 784-residue polypeptide: LPS-assembly protein LptD (784 aa).

An N-terminal signal peptide occupies residues 1–24 (MKKRIPTLLATMIATALYSQQGLA). 2 cysteine pairs are disulfide-bonded: Cys31-Cys724 and Cys173-Cys725.

Belongs to the LptD family. As to quaternary structure, component of the lipopolysaccharide transport and assembly complex. Interacts with LptE and LptA. In terms of processing, contains two intramolecular disulfide bonds.

The protein localises to the cell outer membrane. Functionally, together with LptE, is involved in the assembly of lipopolysaccharide (LPS) at the surface of the outer membrane. The chain is LPS-assembly protein LptD from Escherichia coli O1:K1 / APEC.